Reading from the N-terminus, the 545-residue chain is Sulfite oxidase, mitochondrial (545 aa).

A mitochondrion-targeting transit peptide spans 1–79 (MLLLHRAVVL…YQDHRCRAAQ (79 aa)). Residues 82–161 (TRIYTKEEVS…LAQYKVGELN (80 aa)) enclose the Cytochrome b5 heme-binding domain. His118 provides a ligand contact to heme b. The residue at position 123 (Ser123) is a Phosphoserine. Heme b-binding residues include His143, Gln145, and His147. Residues 165 to 174 (KVAPTVETSD) form a hinge region. A moco domain region spans residues 175–401 (PYADDPVRHP…YSHWQRRDYK (227 aa)). Mo-molybdopterin-binding positions include 215 to 219 (FTRNH), Cys264, Asp322, His361, Arg366, and 377 to 379 (HVK). The tract at residues 402–538 (GFSPSVDWDT…RGVLSNAWHR (137 aa)) is homodimerization.

Homodimer. Heme b serves as cofactor. Mo-molybdopterin is required as a cofactor.

It is found in the mitochondrion intermembrane space. It catalyses the reaction sulfite + O2 + H2O = sulfate + H2O2. It functions in the pathway energy metabolism; sulfur metabolism. Catalyzes the oxidation of sulfite to sulfate, the terminal reaction in the oxidative degradation of sulfur-containing amino acids. This Macaca fascicularis (Crab-eating macaque) protein is Sulfite oxidase, mitochondrial (SUOX).